The primary structure comprises 481 residues: UDP-N-acetylmuramoyl-L-alanyl-D-glutamate--L-lysine ligase (481 aa).

Ser-42 contacts UDP-N-acetyl-alpha-D-muramoyl-L-alanyl-D-glutamate. 118-124 (GTKGKTT) contacts ATP. UDP-N-acetyl-alpha-D-muramoyl-L-alanyl-D-glutamate-binding positions include Gln-158, 160-161 (TT), Ser-187, and Arg-195. Position 229 is an N6-carboxylysine (Lys-229). Residues 404–407 (DDPN) carry the L-lysine recognition motif motif.

It belongs to the MurCDEF family. MurE subfamily. In terms of processing, carboxylation is probably crucial for Mg(2+) binding and, consequently, for the gamma-phosphate positioning of ATP.

Its subcellular location is the cytoplasm. The catalysed reaction is UDP-N-acetyl-alpha-D-muramoyl-L-alanyl-D-glutamate + L-lysine + ATP = UDP-N-acetyl-alpha-D-muramoyl-L-alanyl-gamma-D-glutamyl-L-lysine + ADP + phosphate + H(+). The protein operates within cell wall biogenesis; peptidoglycan biosynthesis. Functionally, catalyzes the addition of L-lysine to the nucleotide precursor UDP-N-acetylmuramoyl-L-alanyl-D-glutamate (UMAG) in the biosynthesis of bacterial cell-wall peptidoglycan. This Streptococcus pyogenes serotype M6 (strain ATCC BAA-946 / MGAS10394) protein is UDP-N-acetylmuramoyl-L-alanyl-D-glutamate--L-lysine ligase.